We begin with the raw amino-acid sequence, 260 residues long: ATP synthase subunit a (260 aa).

6 helical membrane passes run 37 to 57 (FTNA…FMTL), 95 to 115 (FFPF…IGMF), 125 to 145 (IVVT…TGFV), 154 to 174 (VFVP…IEII), 191 to 211 (MLAG…FMTM), and 233 to 253 (EFLV…MYLH).

This sequence belongs to the ATPase A chain family. As to quaternary structure, F-type ATPases have 2 components, CF(1) - the catalytic core - and CF(0) - the membrane proton channel. CF(1) has five subunits: alpha(3), beta(3), gamma(1), delta(1), epsilon(1). CF(0) has three main subunits: a(1), b(2) and c(9-12). The alpha and beta chains form an alternating ring which encloses part of the gamma chain. CF(1) is attached to CF(0) by a central stalk formed by the gamma and epsilon chains, while a peripheral stalk is formed by the delta and b chains.

The protein localises to the cell inner membrane. In terms of biological role, key component of the proton channel; it plays a direct role in the translocation of protons across the membrane. The sequence is that of ATP synthase subunit a from Parvibaculum lavamentivorans (strain DS-1 / DSM 13023 / NCIMB 13966).